The sequence spans 360 residues: Sphingolipid delta(4)-desaturase (360 aa).

A run of 3 helical transmembrane segments spans residues 67–87 (AVVL…VLSF), 89–109 (FLAL…LCIH), and 125–145 (LFAI…FQPY). The Histidine box-1 signature appears at 109–113 (HELSH). Residues 146 to 150 (HQLHH) carry the Histidine box-2 motif. The next 3 membrane-spanning stretches (helical) occupy residues 170–190 (VLSS…FYAL), 202–222 (FIHL…IKFG), and 228–248 (WYLI…GHFI). The short motif at 288–292 (HNEHH) is the Histidine box-3 element.

This sequence belongs to the fatty acid desaturase type 1 family. DEGS subfamily.

Its subcellular location is the membrane. It catalyses the reaction an N-acylsphinganine + 2 Fe(II)-[cytochrome b5] + O2 + 2 H(+) = an N-acylsphing-4-enine + 2 Fe(III)-[cytochrome b5] + 2 H2O. It functions in the pathway lipid metabolism; sphingolipid metabolism. Delta(4)-fatty-acid desaturase which introduces a double bond at the 4-position in the long-chain base (LCB) of ceramides. Required for the formation of the monounsaturated sphingoid base (E)-sphing-4-enine during glucosylceramide (GluCer) biosynthesis. This Komagataella phaffii (strain GS115 / ATCC 20864) (Yeast) protein is Sphingolipid delta(4)-desaturase.